The following is a 190-amino-acid chain: Elongation factor P-like protein (190 aa).

The protein belongs to the elongation factor P family.

The protein is Elongation factor P-like protein of Pseudoalteromonas translucida (strain TAC 125).